Here is a 130-residue protein sequence, read N- to C-terminus: Small ribosomal subunit protein uS11 (130 aa).

Belongs to the universal ribosomal protein uS11 family. Part of the 30S ribosomal subunit. Interacts with proteins S7 and S18. Binds to IF-3.

In terms of biological role, located on the platform of the 30S subunit, it bridges several disparate RNA helices of the 16S rRNA. Forms part of the Shine-Dalgarno cleft in the 70S ribosome. This is Small ribosomal subunit protein uS11 from Thermotoga maritima (strain ATCC 43589 / DSM 3109 / JCM 10099 / NBRC 100826 / MSB8).